The primary structure comprises 110 residues: Large ribosomal subunit protein uL24 (110 aa).

Belongs to the universal ribosomal protein uL24 family. As to quaternary structure, part of the 50S ribosomal subunit.

In terms of biological role, one of two assembly initiator proteins, it binds directly to the 5'-end of the 23S rRNA, where it nucleates assembly of the 50S subunit. Its function is as follows. One of the proteins that surrounds the polypeptide exit tunnel on the outside of the subunit. The chain is Large ribosomal subunit protein uL24 from Frankia alni (strain DSM 45986 / CECT 9034 / ACN14a).